The sequence spans 68 residues: Pleurocidin (68 aa).

Residues 1–22 (MKFTATFLMMAIFVLMVEPGEC) form the signal peptide. Residues 48–68 (GDKQELNKRAVDEDPNVIVFE) constitute a propeptide that is removed on maturation.

Belongs to the pleurocidin family. In terms of tissue distribution, goblet cells.

The protein localises to the secreted. Its subcellular location is the membrane. Antimicrobial peptide with potent activity against Gram-positive and Gram-negative bacteria. Activity against E.coli and B.subtilis. Weaker activity against L.mucor, s.marcescens and P.aeruginosa. May play a role in innate host defense. The protein is Pleurocidin (ple1) of Pseudopleuronectes americanus (Winter flounder).